The primary structure comprises 163 residues: Cytochrome b6-f complex subunit 4 (163 aa).

The next 3 membrane-spanning stretches (helical) occupy residues 36 to 56, 95 to 115, and 131 to 151; these read LLYIFPVVILGTIACNGGLAV, LLGVLLMVSVPAGLLTVPFLE, and TVFLVGTLVALWLGIGATLPI.

The protein belongs to the cytochrome b family. PetD subfamily. The 4 large subunits of the cytochrome b6-f complex are cytochrome b6, subunit IV (17 kDa polypeptide, petD), cytochrome f and the Rieske protein, while the 4 small subunits are petG, petL, petM and petN. The complex functions as a dimer.

It is found in the plastid. The protein resides in the chloroplast thylakoid membrane. In terms of biological role, component of the cytochrome b6-f complex, which mediates electron transfer between photosystem II (PSII) and photosystem I (PSI), cyclic electron flow around PSI, and state transitions. This Pelargonium hortorum (Common geranium) protein is Cytochrome b6-f complex subunit 4.